Consider the following 418-residue polypeptide: MDATTIDLEQMGRAAKTAAMTLGQLTTLQKNTGLLAMAAALETHADTILAANKADLAAASALPEKFVDRLALTKARIADMAAGVRQVATLDDPTAQTDRAWVNEAGLTIAQKRVPLGVVGMIYEARPNVTVDAAALTFKSGNAVILRGGKEALHSNLALATVLQDALAAKELPRDAVQLITDPSRAVATQMMHLNGYIDVLIPRGGKGLIKAVVEQATVPVIETGAGNCHIYVDAHAQLQMAVAIVVNAKVQRPSVCNAAEKLLIHADVANEQLPVIAKALQDHGVELRGDERARAIVPSMHAATAEDWDTEYNDLIMAVKVVDSEEEAIQHINAHNTKHSEAIITDNYQNSQQFLQQVDAAVVYVNASTRFTDGYEFGFGAEIGISTQKLHARGPMGLAALTTIKYQVLGNGQIRKN.

This sequence belongs to the gamma-glutamyl phosphate reductase family.

The protein localises to the cytoplasm. It catalyses the reaction L-glutamate 5-semialdehyde + phosphate + NADP(+) = L-glutamyl 5-phosphate + NADPH + H(+). It participates in amino-acid biosynthesis; L-proline biosynthesis; L-glutamate 5-semialdehyde from L-glutamate: step 2/2. Functionally, catalyzes the NADPH-dependent reduction of L-glutamate 5-phosphate into L-glutamate 5-semialdehyde and phosphate. The product spontaneously undergoes cyclization to form 1-pyrroline-5-carboxylate. The sequence is that of Gamma-glutamyl phosphate reductase from Lacticaseibacillus paracasei (strain ATCC 334 / BCRC 17002 / CCUG 31169 / CIP 107868 / KCTC 3260 / NRRL B-441) (Lactobacillus paracasei).